A 269-amino-acid polypeptide reads, in one-letter code: uncharacterized protein (269 aa).

The stretch at 3-66 (VDQAAIDEIL…QNLQNLAEGA (64 aa)) forms a coiled coil. The tract at residues 83-142 (AQIPEPPKPEPEVEQPETETGPEPEPEAEPELKEVKEDEPPEEDVVRELDESKSAEPIPE) is disordered. Positions 94 to 111 (EVEQPETETGPEPEPEAE) are enriched in acidic residues. The segment covering 112 to 136 (PELKEVKEDEPPEEDVVRELDESKS) has biased composition (basic and acidic residues).

This is an uncharacterized protein from Archaeoglobus fulgidus (strain ATCC 49558 / DSM 4304 / JCM 9628 / NBRC 100126 / VC-16).